A 274-amino-acid polypeptide reads, in one-letter code: Large ribosomal subunit protein uL2cz/uL2cy (274 aa).

2 disordered regions span residues 1-20 (MAIHLYKTSTPSTRNGAVDS) and 223-274 (MNPV…RRSK).

The protein belongs to the universal ribosomal protein uL2 family. Part of the 50S ribosomal subunit.

The protein resides in the plastid. It is found in the chloroplast. The polypeptide is Large ribosomal subunit protein uL2cz/uL2cy (rpl2-A) (Eucalyptus globulus subsp. globulus (Tasmanian blue gum)).